The following is a 1042-amino-acid chain: Kinesin-like protein KIN-5A (1042 aa).

Low complexity predominate over residues 1–14; that stretch reads MDSNNSKKGSSVKS. Positions 1-45 are disordered; it reads MDSNNSKKGSSVKSPCQTPRSTEKSNRDFRVDSNSNSNPVSKNEK. The segment covering 21–31 has biased composition (basic and acidic residues); sequence STEKSNRDFRV. The span at 32-41 shows a compositional bias: polar residues; that stretch reads DSNSNSNPVS. Positions 50–392 constitute a Kinesin motor domain; that stretch reads NIQVIVRCRP…LDYAHRAKHI (343 aa). 136 to 143 lines the ATP pocket; it reads GQTGTGKT. Residues 480 to 517 adopt a coiled-coil conformation; it reads TAGLREKLDKTEKKLYETEQALLDLEEKHRQAVATIKE. Residues 1021–1042 are disordered; that stretch reads KQMQNGEAKHVSNGRPPLTAIN.

It belongs to the TRAFAC class myosin-kinesin ATPase superfamily. Kinesin family. KIN-5/BimC subfamily.

It is found in the cytoplasm. Its subcellular location is the cytoskeleton. The protein resides in the spindle. Functionally, responsible for microtubule translocation. May be important for the organization of phragmoplast-specific arrays of microtubules. Plays an essential role in stabilizing the mitotic spindle. Required during mitotic cytokinesis. The polypeptide is Kinesin-like protein KIN-5A (Arabidopsis thaliana (Mouse-ear cress)).